The chain runs to 840 residues: V-type proton ATPase subunit a, vacuolar isoform (840 aa).

Ala2 bears the N-acetylalanine mark. Residues 2 to 404 (AEKEEAIFRS…DCYGIAQYRE (403 aa)) are Cytoplasmic-facing. Residues 117–145 (LEERLIQMEDATDQIEVQKNDLEQYRFIL) are a coiled coil. The helical transmembrane segment at 405-423 (INAGLPTIVTFPFMFAIMF) threads the bilayer. The Vacuolar segment spans residues 424-425 (GD). Residues 426-442 (MGHGFLMTLAALSLVLN) traverse the membrane as a helical segment. Over 443-456 (EKKINKMKRGEIFD) the chain is Cytoplasmic. The helical transmembrane segment at 457 to 486 (MAFTGRYIILLMGVFSMYTGFLYNDIFSKT) threads the bilayer. Residues 487–534 (MTIFKSGWKWPDHWKKGESITATSVGTYPIGLDWAWHGTENALLFSNS) are Vacuolar-facing. A helical membrane pass occupies residues 535–554 (YKMKLSILMGFIHMTYSYFF). Over 555–572 (SLANHLYFNSMIDIIGNF) the chain is Cytoplasmic. The helical transmembrane segment at 573–593 (IPGLLFMQGIFGYLSVCIVYK) threads the bilayer. Residues 594–636 (WAVDWVKDGKPAPGLLNMLINMFLSPGTIDDELYPHQAKVQVF) are Vacuolar-facing. The helical transmembrane segment at 637-656 (LLLMALVCIPWLLLVKPLHF) threads the bilayer. At 657–719 (KFTHKKKSHE…DIMIHQVIHT (63 aa)) the chain is on the cytoplasmic side. A helical transmembrane segment spans residues 720-744 (IEFCLNCVSHTASYLRLWALSLAHA). Topologically, residues 745-765 (QLSSVLWTMTIQIAFGFRGFV) are vacuolar. A helical transmembrane segment spans residues 766–804 (GVFMTVALFAMWFALTCAVLVLMEGTSAMLHSLRLHWVE). Residues 805 to 840 (SMSKFFVGEGLPYEPFAFEYKDMEVAVASASSSASS) lie on the Cytoplasmic side of the membrane.

Belongs to the V-ATPase 116 kDa subunit family. V-ATPase is a heteromultimeric enzyme composed of a peripheral catalytic V1 complex (components A to H) attached to an integral membrane V0 proton pore complex (components: a, c, c', c'', d, e, f and VOA1). Post-translationally, glycosylated.

It localises to the vacuole membrane. Functionally, subunit of the V0 complex of vacuolar(H+)-ATPase (V-ATPase), a multisubunit enzyme composed of a peripheral complex (V1) that hydrolyzes ATP and a membrane integral complex (V0) that translocates protons. V-ATPase is responsible for acidifying and maintaining the pH of intracellular compartments. Is present only in vacuolar V-ATPase complexes; enzymes containing this subunit have a 4-fold higher ratio of proton transport to ATP hydrolysis than complexes containing the Golgi/endosomal isoform and undergo reversible dissociation of V1 and V0 in response to glucose depletion. This chain is V-type proton ATPase subunit a, vacuolar isoform, found in Saccharomyces cerevisiae (strain ATCC 204508 / S288c) (Baker's yeast).